A 185-amino-acid chain; its full sequence is Probable chorismate pyruvate-lyase (185 aa).

Positions 80, 118, and 170 each coordinate substrate.

It belongs to the UbiC family.

Its subcellular location is the cytoplasm. The enzyme catalyses chorismate = 4-hydroxybenzoate + pyruvate. The protein operates within cofactor biosynthesis; ubiquinone biosynthesis. Removes the pyruvyl group from chorismate, with concomitant aromatization of the ring, to provide 4-hydroxybenzoate (4HB) for the ubiquinone pathway. This is Probable chorismate pyruvate-lyase from Pseudomonas putida (strain ATCC 47054 / DSM 6125 / CFBP 8728 / NCIMB 11950 / KT2440).